Consider the following 391-residue polypeptide: Alkanesulfonate monooxygenase (391 aa).

This sequence belongs to the SsuD family.

The enzyme catalyses an alkanesulfonate + FMNH2 + O2 = an aldehyde + FMN + sulfite + H2O + 2 H(+). In terms of biological role, catalyzes the desulfonation of aliphatic sulfonates. This chain is Alkanesulfonate monooxygenase, found in Rhodopseudomonas palustris (strain TIE-1).